The primary structure comprises 347 residues: L-threonine 3-dehydrogenase (347 aa).

Zn(2+) is bound at residue cysteine 42. Residues threonine 44 and histidine 47 each act as charge relay system in the active site. Residues histidine 67, glutamate 68, cysteine 97, cysteine 100, cysteine 103, and cysteine 111 each contribute to the Zn(2+) site. Residues isoleucine 179, glutamate 199, arginine 204, 266-268, and 291-292 contribute to the NAD(+) site; these read LGL and IT.

This sequence belongs to the zinc-containing alcohol dehydrogenase family. As to quaternary structure, homotetramer. Zn(2+) is required as a cofactor.

Its subcellular location is the cytoplasm. It carries out the reaction L-threonine + NAD(+) = (2S)-2-amino-3-oxobutanoate + NADH + H(+). It functions in the pathway amino-acid degradation; L-threonine degradation via oxydo-reductase pathway; glycine from L-threonine: step 1/2. Catalyzes the NAD(+)-dependent oxidation of L-threonine to 2-amino-3-ketobutyrate. The protein is L-threonine 3-dehydrogenase of Caldanaerobacter subterraneus subsp. tengcongensis (strain DSM 15242 / JCM 11007 / NBRC 100824 / MB4) (Thermoanaerobacter tengcongensis).